Reading from the N-terminus, the 133-residue chain is S-adenosylmethionine decarboxylase proenzyme (133 aa).

The Schiff-base intermediate with substrate; via pyruvic acid role is filled by Ser-65. Ser-65 carries the pyruvic acid (Ser); by autocatalysis modification. His-70 functions as the Proton acceptor; for processing activity in the catalytic mechanism. Catalysis depends on Cys-85, which acts as the Proton donor; for catalytic activity.

It belongs to the prokaryotic AdoMetDC family. Type 1 subfamily. As to quaternary structure, heterotetramer of two alpha and two beta chains arranged as a dimer of alpha/beta heterodimers. Pyruvate is required as a cofactor. Is synthesized initially as an inactive proenzyme. Formation of the active enzyme involves a self-maturation process in which the active site pyruvoyl group is generated from an internal serine residue via an autocatalytic post-translational modification. Two non-identical subunits are generated from the proenzyme in this reaction, and the pyruvate is formed at the N-terminus of the alpha chain, which is derived from the carboxyl end of the proenzyme. The post-translation cleavage follows an unusual pathway, termed non-hydrolytic serinolysis, in which the side chain hydroxyl group of the serine supplies its oxygen atom to form the C-terminus of the beta chain, while the remainder of the serine residue undergoes an oxidative deamination to produce ammonia and the pyruvoyl group blocking the N-terminus of the alpha chain.

It catalyses the reaction S-adenosyl-L-methionine + H(+) = S-adenosyl 3-(methylsulfanyl)propylamine + CO2. It functions in the pathway amine and polyamine biosynthesis; S-adenosylmethioninamine biosynthesis; S-adenosylmethioninamine from S-adenosyl-L-methionine: step 1/1. Its function is as follows. Catalyzes the decarboxylation of S-adenosylmethionine to S-adenosylmethioninamine (dcAdoMet), the propylamine donor required for the synthesis of the polyamines spermine and spermidine from the diamine putrescine. This chain is S-adenosylmethionine decarboxylase proenzyme, found in Brevibacillus brevis (strain 47 / JCM 6285 / NBRC 100599).